A 267-amino-acid polypeptide reads, in one-letter code: Formamidopyrimidine-DNA glycosylase (267 aa).

Pro-2 (schiff-base intermediate with DNA) is an active-site residue. Glu-3 acts as the Proton donor in catalysis. Lys-53 serves as the catalytic Proton donor; for beta-elimination activity. Residues His-82 and Arg-100 each contribute to the DNA site. Residues 230–264 form an FPG-type zinc finger; the sequence is AVYGREGLPCPACGRPVERRVVAGRGTHFCPTCQG. Arg-254 functions as the Proton donor; for delta-elimination activity in the catalytic mechanism.

Belongs to the FPG family. As to quaternary structure, monomer. It depends on Zn(2+) as a cofactor.

It catalyses the reaction Hydrolysis of DNA containing ring-opened 7-methylguanine residues, releasing 2,6-diamino-4-hydroxy-5-(N-methyl)formamidopyrimidine.. The enzyme catalyses 2'-deoxyribonucleotide-(2'-deoxyribose 5'-phosphate)-2'-deoxyribonucleotide-DNA = a 3'-end 2'-deoxyribonucleotide-(2,3-dehydro-2,3-deoxyribose 5'-phosphate)-DNA + a 5'-end 5'-phospho-2'-deoxyribonucleoside-DNA + H(+). In terms of biological role, involved in base excision repair of DNA damaged by oxidation or by mutagenic agents. Acts as a DNA glycosylase that recognizes and removes damaged bases. Has a preference for oxidized purines, such as 7,8-dihydro-8-oxoguanine (8-oxoG). Has AP (apurinic/apyrimidinic) lyase activity and introduces nicks in the DNA strand. Cleaves the DNA backbone by beta-delta elimination to generate a single-strand break at the site of the removed base with both 3'- and 5'-phosphates. This Thermus thermophilus (strain ATCC BAA-163 / DSM 7039 / HB27) protein is Formamidopyrimidine-DNA glycosylase.